The primary structure comprises 243 residues: LexA repressor (243 aa).

The segment at 1-30 is disordered; the sequence is MSDDTGEFTDGSTESPADADGAGRRRAVDN. Over residues 21–30 the composition is skewed to basic and acidic residues; that stretch reads GAGRRRAVDN. Residues 56–76 constitute a DNA-binding region (H-T-H motif); the sequence is IREIGDAVGLTSTSSVAHQLR. Residues Ser-167 and Lys-204 each act as for autocatalytic cleavage activity in the active site.

This sequence belongs to the peptidase S24 family. As to quaternary structure, homodimer.

The catalysed reaction is Hydrolysis of Ala-|-Gly bond in repressor LexA.. Its function is as follows. Represses a number of genes involved in the response to DNA damage (SOS response), including recA and lexA. In the presence of single-stranded DNA, RecA interacts with LexA causing an autocatalytic cleavage which disrupts the DNA-binding part of LexA, leading to derepression of the SOS regulon and eventually DNA repair. The polypeptide is LexA repressor (Mycolicibacterium smegmatis (strain ATCC 700084 / mc(2)155) (Mycobacterium smegmatis)).